Here is a 155-residue protein sequence, read N- to C-terminus: V-type proton ATPase 16 kDa proteolipid subunit c (155 aa).

Residues 1–10 (MSEAKNGPEY) are Lumenal-facing. The helical transmembrane segment at 11 to 33 (ASFFAVMGASAAMVFSALGAAYG) threads the bilayer. Over 34–55 (TAKSGTGIAAMSVMRPEMIMKS) the chain is Cytoplasmic. A helical membrane pass occupies residues 56–76 (IIPVVMAGIIAIYGLVVAVLI). The Lumenal portion of the chain corresponds to 77 to 92 (ANSLNDGISLYRSFLQ). A helical membrane pass occupies residues 93–114 (LGAGLSVGLSGLAAGFAIGIVG). Residues 115–131 (DAGVRGTAQQPRLFVGM) are Cytoplasmic-facing. Residues 132 to 152 (ILILIFAEVLGLYGLIVALIL) traverse the membrane as a helical segment. Topologically, residues 153–155 (STK) are lumenal.

This sequence belongs to the V-ATPase proteolipid subunit family. In terms of assembly, V-ATPase is a heteromultimeric enzyme made up of two complexes: the ATP-hydrolytic V1 complex and the proton translocation V0 complex. The V1 complex consists of three catalytic AB heterodimers that form a heterohexamer, three peripheral stalks each consisting of EG heterodimers, one central rotor including subunits D and F, and the regulatory subunits C and H. The proton translocation complex V0 consists of the proton transport subunit a, a ring of proteolipid subunits c9c'', rotary subunit d, subunits e and f, and the accessory subunits ATP6AP1/Ac45 and ATP6AP2/PRR. Interacts with the V0 complex V-ATPase subunit a4 ATP6V0A4. Interacts with LASS2. Interacts with RNF182; this interaction leads to ubiquitination and degradation via the proteasome pathway. In terms of processing, ubiquitinated by RNF182, leading to its degradation via the ubiquitin-proteasome pathway. In terms of tissue distribution, expressed in brain (at protein level).

It localises to the cytoplasmic vesicle. Its subcellular location is the clathrin-coated vesicle membrane. The protein localises to the secretory vesicle. The protein resides in the synaptic vesicle membrane. In terms of biological role, proton-conducting pore forming subunit of the V0 complex of vacuolar(H+)-ATPase (V-ATPase), a multisubunit enzyme composed of a peripheral complex (V1) that hydrolyzes ATP and a membrane integral complex (V0) that translocates protons. V-ATPase is responsible for acidifying and maintaining the pH of intracellular compartments and in some cell types, is targeted to the plasma membrane, where it is responsible for acidifying the extracellular environment. The polypeptide is V-type proton ATPase 16 kDa proteolipid subunit c (ATP6V0C) (Bos taurus (Bovine)).